Consider the following 570-residue polypeptide: Probable metalloreductase AIM14 (570 aa).

Residues 1–20 (MKESPLITLVKRHSETHFAN) are Extracellular-facing. A helical membrane pass occupies residues 21 to 41 (IKYGYYVLIISLVYLIGLALL). Over 42 to 69 (RAFGRRTPSRSSSAFKNKIIYRLYDIDP) the chain is Cytoplasmic. A helical membrane pass occupies residues 70–90 (AIHLGILFFAVLIPFYYHYSL). Topologically, residues 91–141 (TTQSTVYLKRLGRLSYALIPLNLFLTLRPNWFLRKNCTYTDFIPFHKWFSR) are extracellular. One can recognise a Ferric oxidoreductase domain in the interval 101–219 (LGRLSYALIP…NLVNVAFILL (119 aa)). Residues 142–162 (IITVIGLLHGIFFIIKWAIDD) form a helical membrane-spanning segment. Residues 163–176 (NVSLKQKLILKTFN) are Cytoplasmic-facing. The helical transmembrane segment at 177-197 (FAGFIISILVLFLLICSIGPM) threads the bilayer. Residues 198–373 (RRYNYRLFYI…PEECYSQGTN (176 aa)) lie on the Extracellular side of the membrane. In terms of domain architecture, FAD-binding FR-type spans 250 to 388 (FAKSLMILNK…GGSGISFALP (139 aa)). A helical transmembrane segment spans residues 374-394 (IAIICGGSGISFALPLFRHFF). The Cytoplasmic segment spans residues 395-570 (NKENVKYLKM…INFVCETYGL (176 aa)). The segment covering 480 to 505 (ISNFNSENADSNDNTPETSHSPTKEN) has biased composition (polar residues). The interval 480-509 (ISNFNSENADSNDNTPETSHSPTKENGSMI) is disordered.

This sequence belongs to the ferric reductase (FRE) family. AIM14 subfamily. As to quaternary structure, interacts with ribosomes.

It localises to the membrane. In terms of biological role, probable cell surface metalloreductase. May be involved in iron or copper homeostasis. This is Probable metalloreductase AIM14 (AIM14) from Saccharomyces cerevisiae (strain ATCC 204508 / S288c) (Baker's yeast).